A 212-amino-acid chain; its full sequence is uncharacterized protein (212 aa).

The protein belongs to the flavoredoxin family. Requires FMN as cofactor.

This is an uncharacterized protein from Methanothermobacter thermautotrophicus (strain ATCC 29096 / DSM 1053 / JCM 10044 / NBRC 100330 / Delta H) (Methanobacterium thermoautotrophicum).